Reading from the N-terminus, the 231-residue chain is Lipoprotein-releasing system ATP-binding protein LolD (231 aa).

Positions 9–230 (FSLKDVGKEY…LRAGELYDQN (222 aa)) constitute an ABC transporter domain. An ATP-binding site is contributed by 45–52 (GASGSGKS).

This sequence belongs to the ABC transporter superfamily. Lipoprotein translocase (TC 3.A.1.125) family. As to quaternary structure, the complex is composed of two ATP-binding proteins (LolD) and two transmembrane proteins (LolC and LolE).

The protein resides in the cell inner membrane. Its function is as follows. Part of the ABC transporter complex LolCDE involved in the translocation of mature outer membrane-directed lipoproteins, from the inner membrane to the periplasmic chaperone, LolA. Responsible for the formation of the LolA-lipoprotein complex in an ATP-dependent manner. The chain is Lipoprotein-releasing system ATP-binding protein LolD from Oleidesulfovibrio alaskensis (strain ATCC BAA-1058 / DSM 17464 / G20) (Desulfovibrio alaskensis).